The primary structure comprises 448 residues: Proton extrusion protein PxcA (448 aa).

4 helical membrane passes run I231–I251, I323–L343, L372–I392, and F408–I428.

It belongs to the CemA family.

It localises to the cell inner membrane. Functionally, required for H(+) efflux immediately after light irradiation to form a rapid H(+) concentration gradient across the thylakoid membranes. Together with PxcL, contributes to transient H(+) uptake following dark to light transition. This chain is Proton extrusion protein PxcA, found in Rippkaea orientalis (strain PCC 8801 / RF-1) (Cyanothece sp. (strain PCC 8801)).